The chain runs to 255 residues: 4-hydroxy-tetrahydrodipicolinate reductase (255 aa).

NAD(+) contacts are provided by residues glycine 13–methionine 18, cysteine 90–threonine 92, and serine 114–methionine 117. The active-site Proton donor/acceptor is histidine 147. Residue histidine 148 coordinates (S)-2,3,4,5-tetrahydrodipicolinate. The Proton donor role is filled by lysine 151. Residue glycine 157 to threonine 158 coordinates (S)-2,3,4,5-tetrahydrodipicolinate.

The protein belongs to the DapB family.

It localises to the cytoplasm. The enzyme catalyses (S)-2,3,4,5-tetrahydrodipicolinate + NAD(+) + H2O = (2S,4S)-4-hydroxy-2,3,4,5-tetrahydrodipicolinate + NADH + H(+). The catalysed reaction is (S)-2,3,4,5-tetrahydrodipicolinate + NADP(+) + H2O = (2S,4S)-4-hydroxy-2,3,4,5-tetrahydrodipicolinate + NADPH + H(+). It participates in amino-acid biosynthesis; L-lysine biosynthesis via DAP pathway; (S)-tetrahydrodipicolinate from L-aspartate: step 4/4. Functionally, catalyzes the conversion of 4-hydroxy-tetrahydrodipicolinate (HTPA) to tetrahydrodipicolinate. This is 4-hydroxy-tetrahydrodipicolinate reductase from Clostridium tetani (strain Massachusetts / E88).